The following is a 425-amino-acid chain: MTKALTGVRILDFTHVQSGPTCTQLLAWFGADVIKVERPGVGDITRGQLQDIPNVDSLYFTMLNHNKRSITLDTKNPKGKEVLTELIKKCDVLVENFGPGVLDRMGFPWEKIQQINPKMIVASIKGFGPGPYEDCKVYENVAQCTGGAASTTGFRDGLPLVTGAQIGDSGTGLHLALGIVTALYQRTHSGKGQRVTAAMQDGVLNLARVKLRDQQRLAHGPLREYSQFGEGIPFGDAVPRAGNDSGGGQPGRILKCKGWETDPNAYIYFITQAPVWEKICDVIGEPTWKTDPNYAKPAARLPRLNEIFARIEQWTMTKTKFEAMEILNKDDIPCGPILSMKEIAEDQSLRATGTVVEVDHPTRGKYISVGNPIKLSDSPSDVQRSPLLGEHTDEILRSVLGFSDHQVADIHKSGALAPPQKQAAE.

CoA is bound by residues 17–18 (QS), Arg-38, 72–75 (LDTK), 96–98 (NFG), Arg-104, and 136–139 (KVYE). The active-site Nucleophile is Asp-168. Residue 247–249 (GGQ) coordinates substrate.

The protein belongs to the CoA-transferase III family. Frc subfamily. Homodimer.

It catalyses the reaction formyl-CoA + oxalate = oxalyl-CoA + formate. The protein operates within metabolic intermediate degradation; oxalate degradation; CO(2) and formate from oxalate: step 1/2. Functionally, involved in the catabolism of oxalate and in the adapatation to low pH via the induction of the oxalate-dependent acid tolerance response (ATR). Catalyzes the transfer of the CoA moiety from formyl-CoA to oxalate. The sequence is that of Formyl-CoA:oxalate CoA-transferase from Bradyrhizobium diazoefficiens (strain JCM 10833 / BCRC 13528 / IAM 13628 / NBRC 14792 / USDA 110).